We begin with the raw amino-acid sequence, 1079 residues long: Zn(2)-C6 fungal-type transcription factor FTF1a (1079 aa).

A DNA-binding region (zn(2)-C6 fungal-type) is located at residues 177-204 (CIACRRKKIRCSGEKPACKQCLHSCIPC).

Its subcellular location is the nucleus. Functionally, zn(2)-C6 fungal-type transcription factor that has a role in the establishment of the fungus within the plant and/or the progress of the disease. Regulates the expression of virulence factors such as SIX1 and SIX6. The protein is Zn(2)-C6 fungal-type transcription factor FTF1a of Fusarium oxysporum f. sp. lycopersici (strain 4287 / CBS 123668 / FGSC 9935 / NRRL 34936) (Fusarium vascular wilt of tomato).